The primary structure comprises 292 residues: 33 kDa chaperonin (292 aa).

Intrachain disulfides connect C229/C231 and C262/C265.

Belongs to the HSP33 family. Post-translationally, under oxidizing conditions two disulfide bonds are formed involving the reactive cysteines. Under reducing conditions zinc is bound to the reactive cysteines and the protein is inactive.

The protein localises to the cytoplasm. In terms of biological role, redox regulated molecular chaperone. Protects both thermally unfolding and oxidatively damaged proteins from irreversible aggregation. Plays an important role in the bacterial defense system toward oxidative stress. This Photobacterium profundum (strain SS9) protein is 33 kDa chaperonin.